The primary structure comprises 254 residues: Floral homeotic protein APETALA 1 (254 aa).

The MADS-box domain occupies 3 to 57 (RGRVQLKRIENKINRQVTFSKRRAGLLKKAHEISVLCDAEVALVVFSHKGKLFEY). In terms of domain architecture, K-box spans 88–178 (NTNWSMEYNR…SKQIKEREKI (91 aa)).

The protein resides in the nucleus. Its function is as follows. Controls floral meristem identity. Is also required for normal development of sepals and petals. Is required for the transition of an influorescence meristem into a floral meristem. Interacts with LEAFY. The protein is Floral homeotic protein APETALA 1 (AP1) of Sinapis alba (White mustard).